The following is a 482-amino-acid chain: tRNA sulfurtransferase (482 aa).

The 105-residue stretch at 61–165 (EAIRDALTRI…QDRLLLIKSR (105 aa)) folds into the THUMP domain. Residues 183-184 (LI), lysine 265, glycine 287, and glutamine 296 contribute to the ATP site. Cysteine 344 and cysteine 456 are disulfide-bonded. In terms of domain architecture, Rhodanese spans 404–482 (FVPTDVLLDI…GFSNVKVYRP (79 aa)). The active-site Cysteine persulfide intermediate is the cysteine 456.

The protein belongs to the ThiI family.

Its subcellular location is the cytoplasm. It catalyses the reaction [ThiI sulfur-carrier protein]-S-sulfanyl-L-cysteine + a uridine in tRNA + 2 reduced [2Fe-2S]-[ferredoxin] + ATP + H(+) = [ThiI sulfur-carrier protein]-L-cysteine + a 4-thiouridine in tRNA + 2 oxidized [2Fe-2S]-[ferredoxin] + AMP + diphosphate. The catalysed reaction is [ThiS sulfur-carrier protein]-C-terminal Gly-Gly-AMP + S-sulfanyl-L-cysteinyl-[cysteine desulfurase] + AH2 = [ThiS sulfur-carrier protein]-C-terminal-Gly-aminoethanethioate + L-cysteinyl-[cysteine desulfurase] + A + AMP + 2 H(+). It participates in cofactor biosynthesis; thiamine diphosphate biosynthesis. Its function is as follows. Catalyzes the ATP-dependent transfer of a sulfur to tRNA to produce 4-thiouridine in position 8 of tRNAs, which functions as a near-UV photosensor. Also catalyzes the transfer of sulfur to the sulfur carrier protein ThiS, forming ThiS-thiocarboxylate. This is a step in the synthesis of thiazole, in the thiamine biosynthesis pathway. The sulfur is donated as persulfide by IscS. The protein is tRNA sulfurtransferase of Pectobacterium atrosepticum (strain SCRI 1043 / ATCC BAA-672) (Erwinia carotovora subsp. atroseptica).